Reading from the N-terminus, the 279-residue chain is NAD kinase (279 aa).

Catalysis depends on aspartate 57, which acts as the Proton acceptor. Residues 57–58, 133–134, arginine 159, aspartate 161, 172–177, and alanine 196 contribute to the NAD(+) site; these read DG, NE, and TAYNKS.

This sequence belongs to the NAD kinase family. A divalent metal cation serves as cofactor.

The protein localises to the cytoplasm. The catalysed reaction is NAD(+) + ATP = ADP + NADP(+) + H(+). Its function is as follows. Involved in the regulation of the intracellular balance of NAD and NADP, and is a key enzyme in the biosynthesis of NADP. Catalyzes specifically the phosphorylation on 2'-hydroxyl of the adenosine moiety of NAD to yield NADP. The sequence is that of NAD kinase from Streptococcus thermophilus (strain CNRZ 1066).